A 203-amino-acid chain; its full sequence is GTP-binding protein rho4 (203 aa).

Residue 21 to 28 (GDGGCGKT) participates in GTP binding. The Effector region motif lies at 43-51 (YVPTVFENY). 70–74 (DTAGQ) is a GTP binding site. Cys-200 is modified (cysteine methyl ester). Cys-200 carries S-geranylgeranyl cysteine lipidation. A propeptide spans 201 to 203 (VIL) (removed in mature form).

Belongs to the small GTPase superfamily. Rho family.

It localises to the membrane. Its function is as follows. Required for cell separation. Involved in the regulation of the septum degradation during cytokinesis and in the organization of F-actin patches and cytoplasmic microtubules. This is GTP-binding protein rho4 (rho4) from Schizosaccharomyces pombe (strain 972 / ATCC 24843) (Fission yeast).